A 776-amino-acid polypeptide reads, in one-letter code: Heat shock protein 110 (776 aa).

A disordered region spans residues 741–776 (ILNKKKPAAPAPPKKEEPQPAAGDQPQSQPGEMDVD).

The protein belongs to the heat shock protein 70 family.

In Caenorhabditis elegans, this protein is Heat shock protein 110.